The primary structure comprises 152 residues: uncharacterized protein (152 aa).

A run of 4 helical transmembrane segments spans residues 2 to 22, 26 to 46, 92 to 112, and 128 to 148; these read ENLIVAISNFPAVLPIGLSFL, FITFGTITFVSIASFISHLIE, VVPIVNNKWLFAMTIPVFILL, and YIITHCMWHAGIFGLMYYFLK.

Its subcellular location is the membrane. This is an uncharacterized protein from Acanthamoeba polyphaga mimivirus (APMV).